The primary structure comprises 136 residues: Small ribosomal subunit protein uS12 (136 aa).

At D89 the chain carries 3-methylthioaspartic acid. The segment at 104 to 136 is disordered; the sequence is TAGVNGRTQRRSKYGAKRPKPGQAAAAAKGKKK. Positions 111 to 123 are enriched in basic residues; the sequence is TQRRSKYGAKRPK. Over residues 124–136 the composition is skewed to low complexity; the sequence is PGQAAAAAKGKKK.

It belongs to the universal ribosomal protein uS12 family. In terms of assembly, part of the 30S ribosomal subunit. Contacts proteins S8 and S17. May interact with IF1 in the 30S initiation complex.

With S4 and S5 plays an important role in translational accuracy. Functionally, interacts with and stabilizes bases of the 16S rRNA that are involved in tRNA selection in the A site and with the mRNA backbone. Located at the interface of the 30S and 50S subunits, it traverses the body of the 30S subunit contacting proteins on the other side and probably holding the rRNA structure together. The combined cluster of proteins S8, S12 and S17 appears to hold together the shoulder and platform of the 30S subunit. The sequence is that of Small ribosomal subunit protein uS12 from Parabacteroides distasonis (strain ATCC 8503 / DSM 20701 / CIP 104284 / JCM 5825 / NCTC 11152).